The primary structure comprises 145 residues: Large ribosomal subunit protein uL15 (145 aa).

The span at 1-11 (MELHSLKSTPG) shows a compositional bias: polar residues. The tract at residues 1–48 (MELHSLKSTPGSRKEKHRKGRGHAAGKGKQAGKGQSGQRKRSKVRLGF) is disordered. Positions 14-26 (KEKHRKGRGHAAG) are enriched in basic residues.

This sequence belongs to the universal ribosomal protein uL15 family. Part of the 50S ribosomal subunit.

In terms of biological role, binds to the 23S rRNA. The protein is Large ribosomal subunit protein uL15 of Mycoplasmopsis pulmonis (strain UAB CTIP) (Mycoplasma pulmonis).